We begin with the raw amino-acid sequence, 410 residues long: Neuroserpin (410 aa).

The N-terminal stretch at 1 to 16 (MTYLELLALLALQSVV) is a signal peptide. Residues asparagine 157, asparagine 321, and asparagine 401 are each glycosylated (N-linked (GlcNAc...) asparagine). Serine 403 carries an O-linked (Xyl...) (chondroitin sulfate) serine glycan.

This sequence belongs to the serpin family. As to expression, detected in neurons in embryonic brain cortex (at protein level). During embryonic development mostly expressed in CNS. In adult expressed in brain and much less in spinal cord, heart, kidney and testis.

The protein localises to the secreted. The protein resides in the cytoplasmic vesicle. Its subcellular location is the secretory vesicle lumen. It is found in the perikaryon. In terms of biological role, serine protease inhibitor that inhibits plasminogen activators and plasmin but not thrombin. May be involved in the formation or reorganization of synaptic connections as well as for synaptic plasticity in the adult nervous system. May protect neurons from cell damage by tissue-type plasminogen activator. The sequence is that of Neuroserpin (Serpini1) from Mus musculus (Mouse).